The following is a 320-amino-acid chain: Glutathione synthetase (320 aa).

Residues 133–317 form the ATP-grasp domain; that stretch reads KMYTLQFAAV…LGEKVICWLE (185 aa). ATP is bound at residue 159–215; the sequence is LEEHGAAVLKPLGGKAGEGILFLDPGDRNFNSLVEISTQHGKEPVMVQRFLPEAKEG. Mg(2+) contacts are provided by Glu288 and Asn290.

The protein belongs to the prokaryotic GSH synthase family. It depends on Mg(2+) as a cofactor. Requires Mn(2+) as cofactor.

It catalyses the reaction gamma-L-glutamyl-L-cysteine + glycine + ATP = glutathione + ADP + phosphate + H(+). Its pathway is sulfur metabolism; glutathione biosynthesis; glutathione from L-cysteine and L-glutamate: step 2/2. The sequence is that of Glutathione synthetase from Synechocystis sp. (strain ATCC 27184 / PCC 6803 / Kazusa).